A 365-amino-acid chain; its full sequence is Glutamate 5-kinase 1 (365 aa).

Position 9 (Lys9) interacts with ATP. The substrate site is built by Ser49, Asp136, and Asn148. ATP contacts are provided by residues 168 to 169 (TD) and 210 to 216 (TGGMKSK). The PUA domain occupies 276–353 (SGEIIIDAGA…DELDFEKTFE (78 aa)).

Belongs to the glutamate 5-kinase family.

It is found in the cytoplasm. The catalysed reaction is L-glutamate + ATP = L-glutamyl 5-phosphate + ADP. Its pathway is amino-acid biosynthesis; L-proline biosynthesis; L-glutamate 5-semialdehyde from L-glutamate: step 1/2. Catalyzes the transfer of a phosphate group to glutamate to form L-glutamate 5-phosphate. This is Glutamate 5-kinase 1 from Bacillus subtilis (strain 168).